The chain runs to 276 residues: Plant cysteine oxidase 2 (276 aa).

The segment at 1 to 40 is disordered; it reads MGTDTVMSGRVRKDLSKTNPNGNIPENRSNSRKKIQRRSK. The segment covering 17–28 has biased composition (polar residues); it reads KTNPNGNIPENR. The span at 30–40 shows a compositional bias: basic residues; the sequence is NSRKKIQRRSK. H134, H136, and H197 together coordinate Fe cation.

It belongs to the cysteine dioxygenase family. Fe(2+) serves as cofactor.

The protein resides in the nucleus. Its subcellular location is the cytoplasm. The enzyme catalyses L-cysteine + O2 = 3-sulfino-L-alanine + H(+). Its function is as follows. Catalyzes the oxidation of N-terminal cysteine residues (N-Cys), thus preparing the protein for N-end rule pathway-mediated proteasomal degradation, upstream of the N-end rule enzymes ATE1, ATE2 and PRT6. Controls the preparation of the group VII ethylene response factor (ERF-VII) proteins for degradation via the 26S proteasome N-end rule pathway. Acts as an oxygen sensor that controls the stability of ERF-VII proteins, which are stabilized in flooding-induced hypoxia, and regulate transcriptional adaptation to these adverse conditions. Not active on Cys located inside or at the C-terminus of a peptide. Acts redundantly with PCO1 to repress the anaerobic response. In Arabidopsis thaliana (Mouse-ear cress), this protein is Plant cysteine oxidase 2.